The primary structure comprises 445 residues: D-serine transporter DsdX (445 aa).

Residues 1-4 (MHSQ) are Cytoplasmic-facing. A helical membrane pass occupies residues 5–25 (IWVVSTLLISIVLIVLTIVKF). The Periplasmic segment spans residues 26-28 (KFH). Residues 29–49 (PFLALLLASFFVGTMMGMGPL) traverse the membrane as a helical segment. Residues 50 to 56 (DMVNAIE) are Cytoplasmic-facing. A helical membrane pass occupies residues 57 to 77 (SGIGGTLGFLAAVIGLGTILG). The Periplasmic portion of the chain corresponds to 78-105 (KMMEVSGAAERIGLTLQRCRWLSVDVIM). The helical transmembrane segment at 106 to 126 (VLVGLICGITLFVEVGVVLLI) threads the bilayer. At 127–139 (PLAFSIAKKTNTS) the chain is on the cytoplasmic side. The chain crosses the membrane as a helical span at residues 140–160 (LLKLAIPLCTALMAVHCVVPP). The Periplasmic portion of the chain corresponds to 161–177 (HPAALYVANKLGADIGS). The chain crosses the membrane as a helical span at residues 178 to 198 (VIVYGLLVGLMASLIGGPLFL). The Cytoplasmic portion of the chain corresponds to 199-223 (KFLGQRLPFKPVPTEFADLKVRDEK). The helical transmembrane segment at 224–244 (TLPSLGATLFTILLPIALMLV) threads the bilayer. The Periplasmic segment spans residues 245-257 (KTIAELNMARESG). A helical transmembrane segment spans residues 258–278 (LYILVEFIGNPITAMFIAVFV). The Cytoplasmic portion of the chain corresponds to 279–301 (AYYVLGIRQHMSMGTMLTHTENG). The chain crosses the membrane as a helical span at residues 302-322 (FGSIANILLIIGAGGAFNAIL). Residues 323–342 (KSSSLADTLAVILSNMHMHP) are Periplasmic-facing. A run of 3 helical transmembrane segments spans residues 343 to 363 (ILLA…ATVA), 364 to 384 (MMGA…ISPE), and 385 to 405 (IIAI…DSLF). The Cytoplasmic portion of the chain corresponds to 406–424 (WLVKQYCGATLNETFKYYT). A helical membrane pass occupies residues 425 to 445 (TATFIASVVALAGTFLLSFII).

The protein belongs to the GntP permease family.

It localises to the cell inner membrane. Its function is as follows. A D-serine-specific transporter, may function as a H(+) symporter. This chain is D-serine transporter DsdX, found in Escherichia coli (strain K12).